Here is a 457-residue protein sequence, read N- to C-terminus: MFKTLYARIAIYSITVILFSALISFVLTNVYYHYNLKASNDAKIMKTLKEARQYEQSAKPTHIQQYFKHLGQMNYQIMTVDQKGHKTFYGEPFREDTLSQNAINNVLNNKDYHGIKDKPFALFVTGFFDNVTDNTVGINFKTKDGSIAVFMRPDIGETFSEFRTFLAVLLMLLLFISISLVIASTYSIIRPVKKLKLATERLIDGDFETPIKQTRKDEIGTLQYHFNKMRESLGQVDQMRQHFVQNVSHEIKTPLTHIHHLLSELQQTSDKTLRQQYINDIYTITTQLSGLTTELLLLSELDNHQHLLFDDKIQVDQLIKDIIRHEQFAADEKSLIILADLESINFLGNQRLLHQALSNLLINAIKYTDVGGAIDIALQHSHNNIIFTISNDGSPISPQAEARLFERFYKVSKHDNSNGLGLAITKSIIELHHGTIQFTQSNEYVTTFTITLPNNSH.

2 helical membrane-spanning segments follow: residues 9-29 (IAIY…VLTN) and 164-184 (TFLA…VIAS). Residues 186-238 (YSIIRPVKKLKLATERLIDGDFETPIKQTRKDEIGTLQYHFNKMRESLGQVDQ) form the HAMP domain. A Histidine kinase domain is found at 246–456 (NVSHEIKTPL…TFTITLPNNS (211 aa)). H249 carries the phosphohistidine; by autocatalysis modification.

Autophosphorylated.

It is found in the cell membrane. The enzyme catalyses ATP + protein L-histidine = ADP + protein N-phospho-L-histidine.. Functionally, member of the two-component regulatory system HssS/HssR involved in intracellular heme homeostasis and tempering of staphylococcal virulence. HssS functions as a heme sensor histidine kinase which is autophosphorylated at a histidine residue and transfers its phosphate group to an aspartate residue of HssR. HssR/HssS activates the expression of hrtAB, an efflux pump, in response to extracellular heme, hemin, hemoglobin or blood. This chain is Heme sensor protein HssS (hssS), found in Staphylococcus aureus (strain Mu3 / ATCC 700698).